Consider the following 196-residue polypeptide: Adenylate kinase (196 aa).

An ATP-binding site is contributed by Gly9 to Thr17.

It belongs to the archaeal adenylate kinase family.

The protein resides in the cytoplasm. The enzyme catalyses AMP + ATP = 2 ADP. In Pyrococcus horikoshii (strain ATCC 700860 / DSM 12428 / JCM 9974 / NBRC 100139 / OT-3), this protein is Adenylate kinase (adkA).